Consider the following 442-residue polypeptide: UDP-N-acetylmuramoylalanine--D-glutamate ligase (442 aa).

115–121 (GSNGKST) contributes to the ATP binding site.

This sequence belongs to the MurCDEF family.

It is found in the cytoplasm. It catalyses the reaction UDP-N-acetyl-alpha-D-muramoyl-L-alanine + D-glutamate + ATP = UDP-N-acetyl-alpha-D-muramoyl-L-alanyl-D-glutamate + ADP + phosphate + H(+). It participates in cell wall biogenesis; peptidoglycan biosynthesis. Its function is as follows. Cell wall formation. Catalyzes the addition of glutamate to the nucleotide precursor UDP-N-acetylmuramoyl-L-alanine (UMA). This chain is UDP-N-acetylmuramoylalanine--D-glutamate ligase, found in Aliivibrio salmonicida (strain LFI1238) (Vibrio salmonicida (strain LFI1238)).